We begin with the raw amino-acid sequence, 104 residues long: Protein ORF3 (104 aa).

A Nuclear export signal motif is present at residues 1–35 (MVTIPPLVSRWFPVCGFRVCKISSPFAFTTPRWPH). The segment at 78–104 (PALQQGTHSSRQVTPLSLRSRSSTFNK) is disordered.

Interacts with host RGS16.

The protein resides in the host cytoplasm. It is found in the host nucleus. Plays a role in modulating host cell signaling by binding to and degrading host RGS16. Not necessary for virus replication. The polypeptide is Protein ORF3 (Sus scrofa (Pig)).